A 498-amino-acid polypeptide reads, in one-letter code: Trehalose-6-phosphate synthase (498 aa).

D-glucose 6-phosphate is bound at residue arginine 28. Residue 48–49 participates in UDP-alpha-D-glucose binding; sequence GG. D-glucose 6-phosphate contacts are provided by tyrosine 106 and aspartate 160. UDP-alpha-D-glucose-binding residues include arginine 302 and lysine 307. Arginine 340 contacts D-glucose 6-phosphate. 405–409 contacts UDP-alpha-D-glucose; the sequence is LVAKE.

This sequence belongs to the glycosyltransferase 20 family. Homotetramer.

The enzyme catalyses ADP-alpha-D-glucose + D-glucose 6-phosphate = alpha,alpha-trehalose 6-phosphate + ADP + H(+). It carries out the reaction CDP-alpha-D-glucose + D-glucose 6-phosphate = alpha,alpha-trehalose 6-phosphate + CDP + H(+). It catalyses the reaction GDP-alpha-D-glucose + D-glucose 6-phosphate = alpha,alpha-trehalose 6-phosphate + GDP + H(+). The catalysed reaction is TDP-alpha-D-glucose + D-glucose 6-phosphate = 5-methyl-UDP + alpha,alpha-trehalose 6-phosphate + H(+). The enzyme catalyses D-glucose 6-phosphate + UDP-alpha-D-glucose = alpha,alpha-trehalose 6-phosphate + UDP + H(+). The protein operates within glycan biosynthesis; trehalose biosynthesis. Probably involved in the osmoprotection via the biosynthesis of trehalose and in the production of glycogen and alpha-glucan via the TreS-Pep2 branch involved in the biosynthesis of maltose-1-phosphate (M1P). Catalyzes the transfer of glucose from UDP-glucose (UDP-Glc) to D-glucose 6-phosphate (Glc-6-P) to form trehalose-6-phosphate. Probably also able to use ADP-Glc, CDP-Glc, GDP-Glc and TDP-Glc as glucosyl donors. In Mycobacterium leprae (strain TN), this protein is Trehalose-6-phosphate synthase.